The chain runs to 106 residues: Protein translation factor SUI1 homolog (106 aa).

The protein belongs to the SUI1 family.

Functionally, additional factor that functions in concert with eIF-2 and the initiator tRNA in directing the ribosome to the proper start site of translation. The chain is Protein translation factor SUI1 homolog from Acanthamoeba polyphaga mimivirus (APMV).